Here is a 258-residue protein sequence, read N- to C-terminus: Aspartate/glutamate leucyltransferase (258 aa).

Belongs to the R-transferase family. Bpt subfamily.

It is found in the cytoplasm. It catalyses the reaction N-terminal L-glutamyl-[protein] + L-leucyl-tRNA(Leu) = N-terminal L-leucyl-L-glutamyl-[protein] + tRNA(Leu) + H(+). The enzyme catalyses N-terminal L-aspartyl-[protein] + L-leucyl-tRNA(Leu) = N-terminal L-leucyl-L-aspartyl-[protein] + tRNA(Leu) + H(+). In terms of biological role, functions in the N-end rule pathway of protein degradation where it conjugates Leu from its aminoacyl-tRNA to the N-termini of proteins containing an N-terminal aspartate or glutamate. In Rhizobium leguminosarum bv. trifolii (strain WSM2304), this protein is Aspartate/glutamate leucyltransferase.